Consider the following 644-residue polypeptide: uncharacterized protein (644 aa).

The disordered stretch occupies residues 123–644; that stretch reads VSQQIQHDQH…AVGKKKPTKK (522 aa). A compositionally biased stretch (low complexity) spans 133–155; the sequence is PQYNKHPQNNHHPQNTQHSQNNP. Residues 159–174 are compositionally biased toward basic and acidic residues; the sequence is NINESENKEDLSDRSS. Over residues 175–191 the composition is skewed to polar residues; it reads DSANSEESHNSQYSQDS. The segment covering 192–204 has biased composition (basic and acidic residues); that stretch reads GDSRNYQDSEDNK. Residues 216–233 show a composition bias toward polar residues; the sequence is NKLIVQRLTNPKITPDTI. Composition is skewed to basic and acidic residues over residues 236 to 249 and 256 to 279; these read SNKD…KDLS and SIKD…KSKE. Acidic residues-rich tracts occupy residues 292-301 and 310-338; these read DGDDLDDLGN and SDYE…DDSN. Residues 367 to 400 show a composition bias toward low complexity; the sequence is KSPSNSKKSKTNQKLSQSSKKISSKTITNSGSKS. Residues 447 to 476 show a composition bias toward acidic residues; that stretch reads SDDSDNESDNESDNESNNDSDNETDSEIDD. Low complexity predominate over residues 496–531; it reads PKTPMKPNNKTTSVSKPVSKPPVKSSIKNNTKNNKP. Residues 544-558 are compositionally biased toward basic and acidic residues; it reads KQKDQSESQSDKDID. Low complexity predominate over residues 585 to 594; sequence PPKSVSLPSS. Positions 607 to 630 are enriched in polar residues; that stretch reads TAKTQNKSKSQPKTNGSKTSTKSI.

This is an uncharacterized protein from Acanthamoeba polyphaga mimivirus (APMV).